Consider the following 958-residue polypeptide: Glycine dehydrogenase (decarboxylating) (958 aa).

Lys-703 is modified (N6-(pyridoxal phosphate)lysine).

The protein belongs to the GcvP family. The glycine cleavage system is composed of four proteins: P, T, L and H. Requires pyridoxal 5'-phosphate as cofactor.

The catalysed reaction is N(6)-[(R)-lipoyl]-L-lysyl-[glycine-cleavage complex H protein] + glycine + H(+) = N(6)-[(R)-S(8)-aminomethyldihydrolipoyl]-L-lysyl-[glycine-cleavage complex H protein] + CO2. Its function is as follows. The glycine cleavage system catalyzes the degradation of glycine. The P protein binds the alpha-amino group of glycine through its pyridoxal phosphate cofactor; CO(2) is released and the remaining methylamine moiety is then transferred to the lipoamide cofactor of the H protein. The polypeptide is Glycine dehydrogenase (decarboxylating) (Nitrobacter hamburgensis (strain DSM 10229 / NCIMB 13809 / X14)).